A 192-amino-acid chain; its full sequence is Protein GrpE (192 aa).

The segment at 1-34 (MSSKEQKTPNEQVSEEMENTAEQQVEATQETGEC) is disordered. The span at 20-31 (TAEQQVEATQET) shows a compositional bias: polar residues.

It belongs to the GrpE family. Homodimer.

It is found in the cytoplasm. In terms of biological role, participates actively in the response to hyperosmotic and heat shock by preventing the aggregation of stress-denatured proteins, in association with DnaK and GrpE. It is the nucleotide exchange factor for DnaK and may function as a thermosensor. Unfolded proteins bind initially to DnaJ; upon interaction with the DnaJ-bound protein, DnaK hydrolyzes its bound ATP, resulting in the formation of a stable complex. GrpE releases ADP from DnaK; ATP binding to DnaK triggers the release of the substrate protein, thus completing the reaction cycle. Several rounds of ATP-dependent interactions between DnaJ, DnaK and GrpE are required for fully efficient folding. In Yersinia pseudotuberculosis serotype I (strain IP32953), this protein is Protein GrpE.